Here is an 873-residue protein sequence, read N- to C-terminus: Valine--tRNA ligase (873 aa).

The 'HIGH' region signature appears at 43-53 (PNVTGVLHMGH). The 'KMSKS' region motif lies at 532–536 (KMSKS). K535 contacts ATP. A coiled-coil region spans residues 802 to 873 (LGNLINVEEE…IEESIAALTK (72 aa)).

This sequence belongs to the class-I aminoacyl-tRNA synthetase family. ValS type 1 subfamily. As to quaternary structure, monomer.

It localises to the cytoplasm. The catalysed reaction is tRNA(Val) + L-valine + ATP = L-valyl-tRNA(Val) + AMP + diphosphate. Its function is as follows. Catalyzes the attachment of valine to tRNA(Val). As ValRS can inadvertently accommodate and process structurally similar amino acids such as threonine, to avoid such errors, it has a 'posttransfer' editing activity that hydrolyzes mischarged Thr-tRNA(Val) in a tRNA-dependent manner. The protein is Valine--tRNA ligase of Parabacteroides distasonis (strain ATCC 8503 / DSM 20701 / CIP 104284 / JCM 5825 / NCTC 11152).